Here is a 364-residue protein sequence, read N- to C-terminus: D-alanine--D-alanine ligase (364 aa).

Residues 134–344 (KVLLKSFNIP…YESLVDKLIT (211 aa)) form the ATP-grasp domain. 167–222 (NNKLNYPVIVKPSVLGSSIGINVAYNVSQIEKYIEEAFEYDLTVVVEKFIKAREIE) contributes to the ATP binding site. Positions 297, 311, and 313 each coordinate Mg(2+).

This sequence belongs to the D-alanine--D-alanine ligase family. It depends on Mg(2+) as a cofactor. The cofactor is Mn(2+).

The protein resides in the cytoplasm. It carries out the reaction 2 D-alanine + ATP = D-alanyl-D-alanine + ADP + phosphate + H(+). It participates in cell wall biogenesis; peptidoglycan biosynthesis. Cell wall formation. The chain is D-alanine--D-alanine ligase from Borrelia duttonii (strain Ly).